We begin with the raw amino-acid sequence, 212 residues long: Thymidylate kinase (212 aa).

Residue 10–17 (GPEGAGKT) coordinates ATP.

The protein belongs to the thymidylate kinase family.

The enzyme catalyses dTMP + ATP = dTDP + ADP. In terms of biological role, phosphorylation of dTMP to form dTDP in both de novo and salvage pathways of dTTP synthesis. The chain is Thymidylate kinase from Bacillus velezensis (strain DSM 23117 / BGSC 10A6 / LMG 26770 / FZB42) (Bacillus amyloliquefaciens subsp. plantarum).